The primary structure comprises 207 residues: NADH-quinone oxidoreductase subunit A (207 aa).

Helical transmembrane passes span 6-26, 62-82, and 87-107; these read WSAI…LVVP, LVAI…AYAV, and AGWL…IGLV.

This sequence belongs to the complex I subunit 3 family. In terms of assembly, NDH-1 is composed of 14 different subunits. Subunits NuoA, H, J, K, L, M, N constitute the membrane sector of the complex.

It is found in the cell inner membrane. The enzyme catalyses a quinone + NADH + 5 H(+)(in) = a quinol + NAD(+) + 4 H(+)(out). Its function is as follows. NDH-1 shuttles electrons from NADH, via FMN and iron-sulfur (Fe-S) centers, to quinones in the respiratory chain. The immediate electron acceptor for the enzyme in this species is believed to be ubiquinone. Couples the redox reaction to proton translocation (for every two electrons transferred, four hydrogen ions are translocated across the cytoplasmic membrane), and thus conserves the redox energy in a proton gradient. The sequence is that of NADH-quinone oxidoreductase subunit A from Psychrobacter arcticus (strain DSM 17307 / VKM B-2377 / 273-4).